We begin with the raw amino-acid sequence, 78 residues long: Large ribosomal subunit protein bL28 (78 aa).

The protein belongs to the bacterial ribosomal protein bL28 family.

This chain is Large ribosomal subunit protein bL28, found in Clavibacter michiganensis subsp. michiganensis (strain NCPPB 382).